We begin with the raw amino-acid sequence, 210 residues long: Large ribosomal subunit protein uL3 (210 aa).

Belongs to the universal ribosomal protein uL3 family. As to quaternary structure, part of the 50S ribosomal subunit. Forms a cluster with proteins L14 and L19.

One of the primary rRNA binding proteins, it binds directly near the 3'-end of the 23S rRNA, where it nucleates assembly of the 50S subunit. The chain is Large ribosomal subunit protein uL3 from Caldicellulosiruptor bescii (strain ATCC BAA-1888 / DSM 6725 / KCTC 15123 / Z-1320) (Anaerocellum thermophilum).